We begin with the raw amino-acid sequence, 472 residues long: MAIWFARSKTLVSSLRHNLNLSTILIKRDYSHRPIFYTTSQLSSTAYLSPFGSLRHESTAVETQADHLVQQIDEVDAQELDFPGGKVGYTSEMKFIPESSSRRIPCYRVLDEDGRIIPDSDFIPVSEKLAVRMYEQMATLQVMDHIFYEAQRQGRISFYLTSVGEEAINIASAAALSPDDVVLPQYREPGVLLWRGFTLEEFANQCFGNKADYGKGRQMPIHYGSNRLNYFTISSPIATQLPQAAGVGYSLKMDKKNACTVTFIGDGGTSEGDFHAGLNFAAVMEAPVVFICRNNGWAISTHISEQFRSDGIVVKGQAYGIRSIRVDGNDALAVYSAVRSAREMAVTEQRPVLIEMMTYRVGHHSTSDDSTKYRAADEIQYWKMSRNPVNRFRKWVEDNGWWSEEDESKLRSNARKQLLQAIQAAEKWEKQPLTELFNDVYDVKPKNLEEQELGLKELVKKQPQDYPPGFHV.

The transit peptide at 1–56 (MAIWFARSKTLVSSLRHNLNLSTILIKRDYSHRPIFYTTSQLSSTAYLSPFGSLRH) directs the protein to the mitochondrion. Thiamine diphosphate is bound at residue 185–187 (QYR). Ser234, Thr239, and Gln240 together coordinate K(+).

The protein belongs to the BCKDHA family. Heterotetramer of alpha and beta chains. Thiamine diphosphate is required as a cofactor.

It localises to the mitochondrion matrix. It carries out the reaction N(6)-[(R)-lipoyl]-L-lysyl-[protein] + 3-methyl-2-oxobutanoate + H(+) = N(6)-[(R)-S(8)-2-methylpropanoyldihydrolipoyl]-L-lysyl-[protein] + CO2. Functionally, the branched-chain alpha-keto dehydrogenase complex catalyzes the overall conversion of alpha-keto acids to acyl-CoA and CO(2). It contains multiple copies of three enzymatic components: branched-chain alpha-keto acid decarboxylase (E1), lipoamide acyltransferase (E2) and lipoamide dehydrogenase (E3). Required during sugar starvation. The polypeptide is 2-oxoisovalerate dehydrogenase subunit alpha 1, mitochondrial (Arabidopsis thaliana (Mouse-ear cress)).